A 319-amino-acid chain; its full sequence is Quinolinate synthase (319 aa).

Positions 35 and 52 each coordinate iminosuccinate. Residue Cys-97 coordinates [4Fe-4S] cluster. Residues 123-125 and Ser-140 each bind iminosuccinate; that span reads YIN. Cys-183 provides a ligand contact to [4Fe-4S] cluster. Iminosuccinate is bound by residues 209 to 211 and Thr-226; that span reads HPE. Cys-276 is a binding site for [4Fe-4S] cluster.

Belongs to the quinolinate synthase family. Type 2 subfamily. [4Fe-4S] cluster serves as cofactor.

The protein localises to the cytoplasm. It catalyses the reaction iminosuccinate + dihydroxyacetone phosphate = quinolinate + phosphate + 2 H2O + H(+). It functions in the pathway cofactor biosynthesis; NAD(+) biosynthesis; quinolinate from iminoaspartate: step 1/1. Its function is as follows. Catalyzes the condensation of iminoaspartate with dihydroxyacetone phosphate to form quinolinate. The protein is Quinolinate synthase of Microcystis aeruginosa (strain NIES-843 / IAM M-2473).